The following is a 324-amino-acid chain: Adipolin (324 aa).

The signal sequence occupies residues 1–24; that stretch reads MRCWVWLLVAIVLCQQLSVVRVLA. 2 disordered regions span residues 28–66 and 83–121; these read ERKK…DPGL and GANS…MPGA. A compositionally biased stretch (polar residues) spans 40–49; that stretch reads EPFNVSLSNS. N-linked (GlcNAc...) asparagine glycosylation occurs at asparagine 43. Positions 50–60 are enriched in basic and acidic residues; the sequence is EELHETDKLSE. The segment covering 86–98 has biased composition (basic residues); that stretch reads SKKKCKGKDKKLR. Over residues 103–118 the composition is skewed to pro residues; it reads PPGPPGPQGPPGPPGM. The C1q domain maps to 169-324; the sequence is YRRVDEGFHC…SDFMGILMGL (156 aa).

Belongs to the adipolin/erythroferrone family. In terms of assembly, homomultimer; disulfide-linked.

It localises to the secreted. In terms of biological role, insulin-sensitizing adipocyte-secreted protein (adipokine) that regulates glucose metabolism in liver and adipose tissue. In Xenopus tropicalis (Western clawed frog), this protein is Adipolin (c1qtnf12).